Here is a 283-residue protein sequence, read N- to C-terminus: Phospholipid phosphatase 1 (283 aa).

Topologically, residues 1–6 are cytoplasmic; the sequence is MFDKTR. The PDZ-binding; involved in localization to the apical cell membrane motif lies at 5 to 7; sequence TRL. A helical transmembrane segment spans residues 7 to 27; it reads LPYVALDVICVLLAGLPFAIL. Residues 28–53 lie on the Extracellular side of the membrane; that stretch reads TSRHTPFQRGIFCNDDSIKYPYKEDT. The helical transmembrane segment at 54–74 threads the bilayer; sequence IPYALLGGIVIPFCIIVMSIG. Topologically, residues 75–88 are cytoplasmic; the sequence is ESLSVYFNVLHSNS. A helical transmembrane segment spans residues 89-109; sequence FVGNPYIATIYKAVGAFLFGV. At 110 to 164 the chain is on the extracellular side; the sequence is SASQSLTDIAKYTIGSLRPHFLAICNPDWSKINCSDGYIEDYICQGNEEKVKEGR. Residues 120–128 are phosphatase sequence motif I; the sequence is KYTIGSLRP. A glycan (N-linked (GlcNAc...) asparagine) is linked at Asn-142. The chain crosses the membrane as a helical span at residues 165-185; sequence LSFYSGHSSFSMYCMLFVALY. A phosphatase sequence motif II region spans residues 168–171; that stretch reads YSGH. The Proton donors role is filled by His-171. At 186-199 the chain is on the cytoplasmic side; that stretch reads LQARMKGDWARLLR. The chain crosses the membrane as a helical span at residues 200–220; sequence PMLQFGLIAFSIYVGLSRVSD. The segment at 216–227 is phosphatase sequence motif III; sequence SRVSDYKHHWSD. Topologically, residues 221–229 are extracellular; sequence YKHHWSDVT. Catalysis depends on His-223, which acts as the Nucleophile. The helical transmembrane segment at 230–250 threads the bilayer; the sequence is VGLIQGAAMAILVALYVSDFF. The Cytoplasmic portion of the chain corresponds to 251 to 283; the sequence is KDTHSYKERKEEDPHTTLHETASSRNYSTNHEP. Residues 260-283 form a disordered region; the sequence is KEEDPHTTLHETASSRNYSTNHEP. Residues 269 to 283 show a composition bias toward polar residues; the sequence is HETASSRNYSTNHEP.

The protein belongs to the PA-phosphatase related phosphoesterase family. In terms of assembly, forms functional homodimers and homooligomers that are not required for substrate recognition and catalytic activity. Can also form heterooligomers with PLPP2 and PLPP3. Post-translationally, N-glycosylated. N-linked sugars are of the complex type. N-glycosylation is not required for the phosphatase activity. In terms of tissue distribution, widely expressed. Highly expressed in kidney and lung. Almost undetectable in brain, heart, bone, muscle or spleen.

It is found in the cell membrane. The protein localises to the apical cell membrane. Its subcellular location is the membrane raft. It localises to the membrane. The protein resides in the caveola. The enzyme catalyses a 1,2-diacyl-sn-glycero-3-phosphate + H2O = a 1,2-diacyl-sn-glycerol + phosphate. It catalyses the reaction 1,2-dihexadecanoyl-sn-glycero-3-phosphate + H2O = 1,2-dihexadecanoyl-sn-glycerol + phosphate. The catalysed reaction is 1,2-di-(9Z-octadecenoyl)-sn-glycero-3-phosphate + H2O = 1,2-di-(9Z-octadecenoyl)-sn-glycerol + phosphate. It carries out the reaction a monoacyl-sn-glycero-3-phosphate + H2O = a monoacylglycerol + phosphate. The enzyme catalyses (9Z)-octadecenoyl-sn-glycero-3-phosphate + H2O = (9Z-octadecenoyl)-glycerol + phosphate. It catalyses the reaction a 1-acyl-sn-glycero-3-phosphate + H2O = a 1-acyl-sn-glycerol + phosphate. The catalysed reaction is 1-(9Z-octadecenoyl)-sn-glycero-3-phosphate + H2O = 1-(9Z-octadecenoyl)-sn-glycerol + phosphate. It carries out the reaction a 1,2-diacyl-sn-glycerol 3-diphosphate + H2O = a 1,2-diacyl-sn-glycero-3-phosphate + phosphate + H(+). The enzyme catalyses sphing-4-enine 1-phosphate + H2O = sphing-4-enine + phosphate. It catalyses the reaction an N-acylsphing-4-enine 1-phosphate + H2O = an N-acylsphing-4-enine + phosphate. The catalysed reaction is N-(octanoyl)-sphing-4-enine-1-phosphate + H2O = N-octanoylsphing-4-enine + phosphate. It carries out the reaction N-(9Z-octadecenoyl)-ethanolamine phosphate + H2O = N-(9Z-octadecenoyl) ethanolamine + phosphate. The enzyme catalyses 1-hexadecanoyl-2-(9Z-octadecenoyl)-sn-glycero-3-phosphate + H2O = 1-hexadecanoyl-2-(9Z-octadecenoyl)-sn-glycerol + phosphate. Its pathway is lipid metabolism; phospholipid metabolism. Magnesium-independent phospholipid phosphatase. Insensitive to N-ethylmaleimide. In terms of biological role, magnesium-independent phospholipid phosphatase of the plasma membrane that catalyzes the dephosphorylation of a variety of glycerolipid and sphingolipid phosphate esters including phosphatidate/PA, lysophosphatidate/LPA, diacylglycerol pyrophosphate/DGPP, sphingosine 1-phosphate/S1P and ceramide 1-phosphate/C1P. Also acts on N-oleoyl ethanolamine phosphate/N-(9Z-octadecenoyl)-ethanolamine phosphate, a potential physiological compound. Through its extracellular phosphatase activity allows both the hydrolysis and the cellular uptake of these bioactive lipid mediators from the milieu, regulating signal transduction in different cellular processes. It is for instance essential for the extracellular hydrolysis of S1P and subsequent conversion into intracellular S1P. Involved in the regulation of inflammation, platelets activation, cell proliferation and migration among other processes. May also have an intracellular activity to regulate phospholipid-mediated signaling pathways. This Mus musculus (Mouse) protein is Phospholipid phosphatase 1.